The primary structure comprises 435 residues: Nuclear distribution protein nudF 2 (435 aa).

The region spanning 9-41 is the LisH domain; it reads QAEELHKSIIAYLSANGLPETTAILRKELGVTE. WD repeat units lie at residues 86 to 125, 128 to 171, 175 to 214, 217 to 256, 280 to 320, 322 to 361, 366 to 396, and 397 to 434; these read SHRD…LEVT, GHTR…KNIR, GHDH…CVKT, GHTG…ENKL, APLA…LMTL, GHDN…KCVK, THGG…VRQI, and PDVA…QIFA.

Belongs to the WD repeat LIS1/nudF family. Self-associates. Interacts with nudE and dynein.

It localises to the cytoplasm. It is found in the cytoskeleton. The protein localises to the spindle pole. Its function is as follows. Positively regulates the activity of the minus-end directed microtubule motor protein dynein. May enhance dynein-mediated microtubule sliding by targeting dynein to the microtubule plus end. Required for nuclear migration during vegetative growth as well as development. Required for retrograde early endosome (EE) transport from the hyphal tip. Required for localization of dynein to the mitotic spindle poles. Recruits additional proteins to the dynein complex at SPBs. The protein is Nuclear distribution protein nudF 2 of Aspergillus clavatus (strain ATCC 1007 / CBS 513.65 / DSM 816 / NCTC 3887 / NRRL 1 / QM 1276 / 107).